The primary structure comprises 310 residues: MPDSSINSDSGFKHLSVMADAVSQPVAALPAELLDGGLMIDATLGGGGHSALLLERHPDLRLIGLDQDPTARAAAAERLALFGDRVKIVATNFVDFSPAEPAVVVMADLGVSSPQLDVAKRGFSFRLDGPLDMRMNPQVGETAAELIGRLEETELADLIYAYGEERLSRRIARRIKHDLAEQGPYAGTAALAYAVAGCYPPKARRGRIHPATRTFQALRIAVNDELDALDRFLQKAPDWLVPGGLLAVISFHSLEDRRVKTAFLRDQRLERLTRKPLVASEMEIAANPRSRSAKCRFARRLPQAMTADAL.

Residues 47–49 (GGH), aspartate 66, phenylalanine 93, aspartate 108, and glutamine 115 each bind S-adenosyl-L-methionine.

It belongs to the methyltransferase superfamily. RsmH family.

Its subcellular location is the cytoplasm. It catalyses the reaction cytidine(1402) in 16S rRNA + S-adenosyl-L-methionine = N(4)-methylcytidine(1402) in 16S rRNA + S-adenosyl-L-homocysteine + H(+). Functionally, specifically methylates the N4 position of cytidine in position 1402 (C1402) of 16S rRNA. In Prochlorococcus marinus (strain MIT 9303), this protein is Ribosomal RNA small subunit methyltransferase H.